A 291-amino-acid polypeptide reads, in one-letter code: Ribose-phosphate pyrophosphokinase (291 aa).

ATP contacts are provided by residues 34-36 (DGE) and 92-93 (RQ). Positions 125 and 165 each coordinate Mg(2+). Lys188 is an active-site residue. Positions 190 and 214 each coordinate D-ribose 5-phosphate.

This sequence belongs to the ribose-phosphate pyrophosphokinase family. Class III (archaeal) subfamily. It depends on Mg(2+) as a cofactor.

The protein localises to the cytoplasm. It carries out the reaction D-ribose 5-phosphate + ATP = 5-phospho-alpha-D-ribose 1-diphosphate + AMP + H(+). Its pathway is metabolic intermediate biosynthesis; 5-phospho-alpha-D-ribose 1-diphosphate biosynthesis; 5-phospho-alpha-D-ribose 1-diphosphate from D-ribose 5-phosphate (route I): step 1/1. Its function is as follows. Involved in the biosynthesis of the central metabolite phospho-alpha-D-ribosyl-1-pyrophosphate (PRPP) via the transfer of pyrophosphoryl group from ATP to 1-hydroxyl of ribose-5-phosphate (Rib-5-P). The protein is Ribose-phosphate pyrophosphokinase of Methanopyrus kandleri (strain AV19 / DSM 6324 / JCM 9639 / NBRC 100938).